A 320-amino-acid chain; its full sequence is Biotin synthase 2 (320 aa).

One can recognise a Radical SAM core domain in the interval 34 to 261 (NVVQCSKLLS…ASYVRLSAGR (228 aa)). Cysteine 49, cysteine 53, and cysteine 56 together coordinate [4Fe-4S] cluster. Residues cysteine 93, cysteine 124, cysteine 184, and arginine 256 each contribute to the [2Fe-2S] cluster site.

The protein belongs to the radical SAM superfamily. Biotin synthase family. In terms of assembly, homodimer. It depends on [4Fe-4S] cluster as a cofactor. The cofactor is [2Fe-2S] cluster.

The catalysed reaction is (4R,5S)-dethiobiotin + (sulfur carrier)-SH + 2 reduced [2Fe-2S]-[ferredoxin] + 2 S-adenosyl-L-methionine = (sulfur carrier)-H + biotin + 2 5'-deoxyadenosine + 2 L-methionine + 2 oxidized [2Fe-2S]-[ferredoxin]. The protein operates within cofactor biosynthesis; biotin biosynthesis; biotin from 7,8-diaminononanoate: step 2/2. Functionally, catalyzes the conversion of dethiobiotin (DTB) to biotin by the insertion of a sulfur atom into dethiobiotin via a radical-based mechanism. The sequence is that of Biotin synthase 2 from Paracoccus denitrificans (strain Pd 1222).